A 149-amino-acid polypeptide reads, in one-letter code: UPF0178 protein SE_0451 (149 aa).

This sequence belongs to the UPF0178 family.

This Staphylococcus epidermidis (strain ATCC 12228 / FDA PCI 1200) protein is UPF0178 protein SE_0451.